We begin with the raw amino-acid sequence, 264 residues long: 3-methyl-2-oxobutanoate hydroxymethyltransferase (264 aa).

2 residues coordinate Mg(2+): D45 and D84. 3-methyl-2-oxobutanoate contacts are provided by residues 45–46 (DS), D84, and K112. Residue E114 coordinates Mg(2+). The active-site Proton acceptor is E181.

This sequence belongs to the PanB family. As to quaternary structure, homodecamer; pentamer of dimers. The cofactor is Mg(2+).

It localises to the cytoplasm. The catalysed reaction is 3-methyl-2-oxobutanoate + (6R)-5,10-methylene-5,6,7,8-tetrahydrofolate + H2O = 2-dehydropantoate + (6S)-5,6,7,8-tetrahydrofolate. Its pathway is cofactor biosynthesis; (R)-pantothenate biosynthesis; (R)-pantoate from 3-methyl-2-oxobutanoate: step 1/2. Its function is as follows. Catalyzes the reversible reaction in which hydroxymethyl group from 5,10-methylenetetrahydrofolate is transferred onto alpha-ketoisovalerate to form ketopantoate. The polypeptide is 3-methyl-2-oxobutanoate hydroxymethyltransferase (Shewanella halifaxensis (strain HAW-EB4)).